The following is a 652-amino-acid chain: Regulator of DNA class I crossover intermediates 1 (652 aa).

A DNA-binding region (binds DNA containing a D-loop) is located at residues 1–228; the sequence is MNWVGGSRSR…APYKRTNSSE (228 aa). Disordered regions lie at residues 464 to 512 and 621 to 652; these read YLES…KATE and EKES…SNSL. Residues 467–477 show a composition bias toward low complexity; that stretch reads SSQSSQSASYS. Polar residues-rich tracts occupy residues 478-491 and 639-652; these read PRPT…STDL and DTTG…SNSL.

Interacts with MSH5. Interacts with TEX11. Expressed mainly in testis (at protein level). Expressed in spermatogonia and enriched in spermatocytes; absent in testicular somatic cells (at protein level). No expression or low levels in other tissues.

Its subcellular location is the chromosome. Functionally, involved in recombination, probably acting by stabilizing recombination intermediates during meiotic crossover formation. Required for normal germline development and fertility. Required for meiotic progression, complete chromosomal synapsis and crossover formation. Binds double-stranded DNA. However, also binds branched DNA molecules, such as those containing a D-loop or Holliday junction structure. Probably not required for formation of DNA double-strand breaks (DSBs). Also binds RNA in an RNA structure-independent manner, with a preference for binding 3'-UTR regions of mRNAs; may stabilize bound RNAs. The protein is Regulator of DNA class I crossover intermediates 1 of Mus musculus (Mouse).